Reading from the N-terminus, the 293-residue chain is 4-diphosphocytidyl-2-C-methyl-D-erythritol kinase (293 aa).

Residue lysine 16 is part of the active site. Proline 99–serine 109 is a binding site for ATP. The active site involves aspartate 141.

The protein belongs to the GHMP kinase family. IspE subfamily.

It carries out the reaction 4-CDP-2-C-methyl-D-erythritol + ATP = 4-CDP-2-C-methyl-D-erythritol 2-phosphate + ADP + H(+). It participates in isoprenoid biosynthesis; isopentenyl diphosphate biosynthesis via DXP pathway; isopentenyl diphosphate from 1-deoxy-D-xylulose 5-phosphate: step 3/6. Its function is as follows. Catalyzes the phosphorylation of the position 2 hydroxy group of 4-diphosphocytidyl-2C-methyl-D-erythritol. In Paraburkholderia xenovorans (strain LB400), this protein is 4-diphosphocytidyl-2-C-methyl-D-erythritol kinase.